The primary structure comprises 356 residues: D-alanine--D-alanine ligase (356 aa).

One can recognise an ATP-grasp domain in the interval 134 to 339 (KQLFEHRGLP…YSDLITKLID (206 aa)). 167 to 222 (KDKLTYPVFVKPANLGSSVGISKCNNEDELKSGIEEAFQFDRKLVIEQGINAREVE) contributes to the ATP binding site. Positions 293, 306, and 308 each coordinate Mg(2+).

Belongs to the D-alanine--D-alanine ligase family. It depends on Mg(2+) as a cofactor. Mn(2+) is required as a cofactor.

It is found in the cytoplasm. It carries out the reaction 2 D-alanine + ATP = D-alanyl-D-alanine + ADP + phosphate + H(+). Its pathway is cell wall biogenesis; peptidoglycan biosynthesis. Its function is as follows. Cell wall formation. The sequence is that of D-alanine--D-alanine ligase from Staphylococcus haemolyticus (strain JCSC1435).